A 430-amino-acid polypeptide reads, in one-letter code: Gamma-glutamyl phosphate reductase (430 aa).

It belongs to the gamma-glutamyl phosphate reductase family.

It localises to the cytoplasm. It carries out the reaction L-glutamate 5-semialdehyde + phosphate + NADP(+) = L-glutamyl 5-phosphate + NADPH + H(+). The protein operates within amino-acid biosynthesis; L-proline biosynthesis; L-glutamate 5-semialdehyde from L-glutamate: step 2/2. Catalyzes the NADPH-dependent reduction of L-glutamate 5-phosphate into L-glutamate 5-semialdehyde and phosphate. The product spontaneously undergoes cyclization to form 1-pyrroline-5-carboxylate. The chain is Gamma-glutamyl phosphate reductase from Polaromonas naphthalenivorans (strain CJ2).